The sequence spans 305 residues: 4-diphosphocytidyl-2-C-methyl-D-erythritol kinase (305 aa).

K10 is an active-site residue. Position 95-105 (95-105) interacts with ATP; sequence PVTAGLGGGSS. D136 is a catalytic residue. The tract at residues 286-305 is disordered; it reads PGVTPWRSPRSASSPSTKRS. Over residues 290–305 the composition is skewed to low complexity; sequence PWRSPRSASSPSTKRS.

This sequence belongs to the GHMP kinase family. IspE subfamily.

It carries out the reaction 4-CDP-2-C-methyl-D-erythritol + ATP = 4-CDP-2-C-methyl-D-erythritol 2-phosphate + ADP + H(+). It functions in the pathway isoprenoid biosynthesis; isopentenyl diphosphate biosynthesis via DXP pathway; isopentenyl diphosphate from 1-deoxy-D-xylulose 5-phosphate: step 3/6. Functionally, catalyzes the phosphorylation of the position 2 hydroxy group of 4-diphosphocytidyl-2C-methyl-D-erythritol. This chain is 4-diphosphocytidyl-2-C-methyl-D-erythritol kinase, found in Anaeromyxobacter sp. (strain Fw109-5).